The primary structure comprises 529 residues: Zinc finger protein 572 (529 aa).

The disordered stretch occupies residues 1-62; it reads MEQEKKLLVS…EWSKRHRPQH (62 aa). Glycyl lysine isopeptide (Lys-Gly) (interchain with G-Cter in SUMO2) cross-links involve residues K5 and K6. Polar residues predominate over residues 26–35; the sequence is TGDTSMNNLE. A compositionally biased stretch (basic and acidic residues) spans 36–55; sequence TVHHNNSKADKLKEKPSEWS. 12 C2H2-type zinc fingers span residues 132–154, 160–182, 188–210, 216–238, 244–266, 272–294, 300–322, 328–350, 384–406, 412–434, 440–462, and 468–490; these read YKCSECWKSFSNSSHLRTHQRTH, YKCSECAKCFCNSSHLIQHLRMH, YQCGECGKSFSNTSHLIIHERTH, YKCPECGKRFSSSSHLIQHHRSH, YECSVCGKGFSHSYVLIEHQRTH, YKCPDCGKSFSQSSSLIRHQRTH, YKCLECEKSFGCNSTLIKHQRIH, YQCPECGKNFSRSSNLITHQKMH, YRCCECGKSFGLSSHLIRHQRTH, YRCSECWKTFSQSSTLVIHQRTH, YKCPDCGESFSQSFNLIRHRRTH, and YKCTSCEKCFSRSAYLSQHRKIH.

This sequence belongs to the krueppel C2H2-type zinc-finger protein family.

It localises to the nucleus. Functionally, may be involved in transcriptional regulation. In Homo sapiens (Human), this protein is Zinc finger protein 572 (ZNF572).